A 1081-amino-acid chain; its full sequence is Probable sucrose-phosphate synthase 2 (1081 aa).

Disordered stretches follow at residues 116–152 (EQGR…PRGN), 239–267 (EPTE…EDLG), and 760–780 (IKRQ…GDVP). The span at 256-267 (EPEEEEEEEDLG) shows a compositional bias: acidic residues.

This sequence belongs to the glycosyltransferase 1 family. As to quaternary structure, homodimer or homotetramer.

It carries out the reaction beta-D-fructose 6-phosphate + UDP-alpha-D-glucose = sucrose 6(F)-phosphate + UDP + H(+). It participates in glycan biosynthesis; sucrose biosynthesis; sucrose from D-fructose 6-phosphate and UDP-alpha-D-glucose: step 1/2. Its activity is regulated as follows. Activity is regulated by phosphorylation and moderated by concentration of metabolites and light. Its function is as follows. Plays a role in photosynthetic sucrose synthesis by catalyzing the rate-limiting step of sucrose biosynthesis from UDP-glucose and fructose- 6-phosphate. Involved in the regulation of carbon partitioning in the leaves of plants. May regulate the synthesis of sucrose and therefore play a major role as a limiting factor in the export of photoassimilates out of the leaf. Plays a role for sucrose availability that is essential for plant growth and fiber elongation. The sequence is that of Probable sucrose-phosphate synthase 2 (SPS2) from Craterostigma plantagineum (Blue gem).